The following is a 439-amino-acid chain: FBD-associated F-box protein At5g56380 (439 aa).

The F-box domain occupies 1–61; the sequence is MDRISHLADE…LPETWGYQEP (61 aa). Positions 358 to 406 constitute an FBD domain; it reads WNQPGSVPRCLSSSLETLEWVEYGGTHEEKELSTYLFKTAVCFKKASFT.

The chain is FBD-associated F-box protein At5g56380 from Arabidopsis thaliana (Mouse-ear cress).